The chain runs to 1909 residues: Nck-associated protein 5 (1909 aa).

A coiled-coil region spans residues 71–253 (EKLIHELEEE…DLEQQNRTLS (183 aa)). Disordered stretches follow at residues 351–370 (SSYT…SQNW), 736–819 (EEDT…LMEP), 855–997 (PLFE…KKPS), 1026–1469 (SSSF…APLS), 1486–1509 (KGQV…FASW), 1541–1592 (GFGN…RTPQ), 1725–1750 (FPLP…DAEP), and 1763–1885 (SMRA…DYGD). Basic and acidic residues predominate over residues 736–748 (EEDTEKNIPKDNV). Composition is skewed to polar residues over residues 753-789 (RVST…SRSS), 950-965 (APSS…SETA), 981-990 (VISSNPATTE), and 1066-1084 (PRIS…SKSV). 2 stretches are compositionally biased toward low complexity: residues 1110 to 1131 (SPSS…HNSP) and 1178 to 1187 (ASKSSVAVNK). The segment covering 1241–1250 (DGRDGVDNRS) has biased composition (basic and acidic residues). Over residues 1300-1325 (QIITNTAERGNSLTRQNSSTESSPNK) the composition is skewed to polar residues. Residues 1339 to 1366 (GRPSGHPSSGKGSLGSSGSFSSQHGSPS) show a composition bias toward low complexity. Residues 1428–1446 (PGRTQHPSTFETSSTSKLE) show a composition bias toward polar residues. The segment covering 1454–1466 (ASATATDAVSSEA) has biased composition (low complexity). 2 stretches are compositionally biased toward basic and acidic residues: residues 1547–1560 (LKSE…KPEL) and 1567–1576 (ELIKDTKSAD). Polar residues predominate over residues 1869-1878 (YSASGGSNSD).

Interacts with the SH3-containing region of the adapter protein NCK. As to expression, expressed in fetal and adult brain, leukocytes and fetal fibroblasts.

In Homo sapiens (Human), this protein is Nck-associated protein 5 (NCKAP5).